We begin with the raw amino-acid sequence, 24 residues long: Poly-His-poly-Gly peptide 1 (24 aa).

Positions 1–13 (EDDHHHHHHHHHG) are enriched in basic residues. The disordered stretch occupies residues 1–24 (EDDHHHHHHHHHGVGGGGGGGGGG). The segment covering 14–24 (VGGGGGGGGGG) has biased composition (gly residues).

In terms of tissue distribution, expressed by the venom gland.

It is found in the secreted. Functionally, may serve as a metalloproteinase inhibitor during glandular storage. Their inhibition may be instantly disengaged, by dilution or physiochemical change, when venom is injected into tissue of the victim. The polypeptide is Poly-His-poly-Gly peptide 1 (Atheris chlorechis (Western bush viper)).